The sequence spans 106 residues: U1-lycotoxin-Ls1b (106 aa).

Positions 1–19 (MKVLVVVALLVTLISYSSS) are cleaved as a signal peptide. A propeptide spanning residues 20–40 (EGIDDLEADELLSLMANEQTR) is cleaved from the precursor. Disulfide bonds link Cys43-Cys58, Cys50-Cys67, Cys57-Cys85, and Cys69-Cys83.

Belongs to the neurotoxin 19 (CSTX) family. 04 (U1-Lctx) subfamily. In terms of tissue distribution, expressed by the venom gland.

It localises to the secreted. The polypeptide is U1-lycotoxin-Ls1b (Lycosa singoriensis (Wolf spider)).